The chain runs to 387 residues: tRNA N6-adenosine threonylcarbamoyltransferase (387 aa).

2 residues coordinate Fe cation: H112 and H116. Residues 134 to 138, D167, G180, and N325 each bind substrate; that span reads LASGG. D353 contacts Fe cation.

This sequence belongs to the KAE1 / TsaD family. Fe(2+) is required as a cofactor.

It is found in the cytoplasm. It catalyses the reaction L-threonylcarbamoyladenylate + adenosine(37) in tRNA = N(6)-L-threonylcarbamoyladenosine(37) in tRNA + AMP + H(+). Its function is as follows. Required for the formation of a threonylcarbamoyl group on adenosine at position 37 (t(6)A37) in tRNAs that read codons beginning with adenine. Is involved in the transfer of the threonylcarbamoyl moiety of threonylcarbamoyl-AMP (TC-AMP) to the N6 group of A37, together with TsaE and TsaB. TsaD likely plays a direct catalytic role in this reaction. The sequence is that of tRNA N6-adenosine threonylcarbamoyltransferase from Rickettsia typhi (strain ATCC VR-144 / Wilmington).